The sequence spans 255 residues: Imidazole glycerol phosphate synthase subunit HisF (255 aa).

Catalysis depends on residues Asp12 and Asp131.

It belongs to the HisA/HisF family. Heterodimer of HisH and HisF.

It is found in the cytoplasm. It catalyses the reaction 5-[(5-phospho-1-deoxy-D-ribulos-1-ylimino)methylamino]-1-(5-phospho-beta-D-ribosyl)imidazole-4-carboxamide + L-glutamine = D-erythro-1-(imidazol-4-yl)glycerol 3-phosphate + 5-amino-1-(5-phospho-beta-D-ribosyl)imidazole-4-carboxamide + L-glutamate + H(+). Its pathway is amino-acid biosynthesis; L-histidine biosynthesis; L-histidine from 5-phospho-alpha-D-ribose 1-diphosphate: step 5/9. Its function is as follows. IGPS catalyzes the conversion of PRFAR and glutamine to IGP, AICAR and glutamate. The HisF subunit catalyzes the cyclization activity that produces IGP and AICAR from PRFAR using the ammonia provided by the HisH subunit. The polypeptide is Imidazole glycerol phosphate synthase subunit HisF (Salinispora arenicola (strain CNS-205)).